A 215-amino-acid polypeptide reads, in one-letter code: Cytochrome b6 (215 aa).

A helical transmembrane segment spans residues 32 to 52 (IFYCLGGITLTCFLVQVATGF). A heme c-binding site is contributed by Cys35. Heme b-binding residues include His86 and His100. A run of 3 helical transmembrane segments spans residues 90 to 110 (ASMM…TGGF), 116 to 136 (LTWV…VTGY), and 186 to 206 (LHTF…FSMI). Heme b is bound by residues His187 and His202.

It belongs to the cytochrome b family. PetB subfamily. In terms of assembly, the 4 large subunits of the cytochrome b6-f complex are cytochrome b6, subunit IV (17 kDa polypeptide, PetD), cytochrome f and the Rieske protein, while the 4 small subunits are PetG, PetL, PetM and PetN. The complex functions as a dimer. Heme b serves as cofactor. The cofactor is heme c.

Its subcellular location is the plastid. The protein localises to the chloroplast thylakoid membrane. Its function is as follows. Component of the cytochrome b6-f complex, which mediates electron transfer between photosystem II (PSII) and photosystem I (PSI), cyclic electron flow around PSI, and state transitions. This is Cytochrome b6 from Lotus japonicus (Lotus corniculatus var. japonicus).